The chain runs to 147 residues: 3-dehydroquinate dehydratase (147 aa).

Residue Tyr22 is the Proton acceptor of the active site. The substrate site is built by Asn76, His82, and Asp89. His102 (proton donor) is an active-site residue. Substrate-binding positions include 103 to 104 and Arg113; that span reads IS.

Belongs to the type-II 3-dehydroquinase family. As to quaternary structure, homododecamer.

It catalyses the reaction 3-dehydroquinate = 3-dehydroshikimate + H2O. The protein operates within metabolic intermediate biosynthesis; chorismate biosynthesis; chorismate from D-erythrose 4-phosphate and phosphoenolpyruvate: step 3/7. Its function is as follows. Catalyzes a trans-dehydration via an enolate intermediate. The sequence is that of 3-dehydroquinate dehydratase from Fusobacterium nucleatum subsp. nucleatum (strain ATCC 25586 / DSM 15643 / BCRC 10681 / CIP 101130 / JCM 8532 / KCTC 2640 / LMG 13131 / VPI 4355).